A 323-amino-acid chain; its full sequence is tRNA dimethylallyltransferase (323 aa).

12-19 (GPTAAGKT) is an ATP binding site. Position 14–19 (14–19 (TAAGKT)) interacts with substrate. Interaction with substrate tRNA stretches follow at residues 37 to 40 (DSAL) and 161 to 165 (QRLIR).

This sequence belongs to the IPP transferase family. In terms of assembly, monomer. The cofactor is Mg(2+).

The enzyme catalyses adenosine(37) in tRNA + dimethylallyl diphosphate = N(6)-dimethylallyladenosine(37) in tRNA + diphosphate. Its function is as follows. Catalyzes the transfer of a dimethylallyl group onto the adenine at position 37 in tRNAs that read codons beginning with uridine, leading to the formation of N6-(dimethylallyl)adenosine (i(6)A). The sequence is that of tRNA dimethylallyltransferase from Pseudomonas putida (strain GB-1).